A 99-amino-acid polypeptide reads, in one-letter code: DNA-directed RNA polymerase subunit omega (99 aa).

The disordered stretch occupies residues 55 to 99 (EAGTVISDPNPEEKRERLRIEREERKRQREQEQKELENRLRDEKN). Over residues 65 to 99 (PEEKRERLRIEREERKRQREQEQKELENRLRDEKN) the composition is skewed to basic and acidic residues.

It belongs to the RNA polymerase subunit omega family. The RNAP catalytic core consists of 2 alpha, 1 beta, 1 beta' and 1 omega subunit. When a sigma factor is associated with the core the holoenzyme is formed, which can initiate transcription.

The catalysed reaction is RNA(n) + a ribonucleoside 5'-triphosphate = RNA(n+1) + diphosphate. In terms of biological role, promotes RNA polymerase assembly. Latches the N- and C-terminal regions of the beta' subunit thereby facilitating its interaction with the beta and alpha subunits. In Enterococcus faecalis (strain ATCC 700802 / V583), this protein is DNA-directed RNA polymerase subunit omega.